Reading from the N-terminus, the 144-residue chain is 3-hydroxyacyl-[acyl-carrier-protein] dehydratase FabZ (144 aa).

The active site involves His48.

This sequence belongs to the thioester dehydratase family. FabZ subfamily.

It is found in the cytoplasm. The enzyme catalyses a (3R)-hydroxyacyl-[ACP] = a (2E)-enoyl-[ACP] + H2O. Its function is as follows. Involved in unsaturated fatty acids biosynthesis. Catalyzes the dehydration of short chain beta-hydroxyacyl-ACPs and long chain saturated and unsaturated beta-hydroxyacyl-ACPs. In Chloroflexus aggregans (strain MD-66 / DSM 9485), this protein is 3-hydroxyacyl-[acyl-carrier-protein] dehydratase FabZ.